Here is a 452-residue protein sequence, read N- to C-terminus: Alkane uptake protein A (452 aa).

Positions 1-36 (MSERSVYMVLSPRFSVRAVSLAVAAVSASLSMPTSA) are cleaved as a signal peptide.

The protein belongs to the OmpP1/FadL family. As to quaternary structure, interacts with the inner membrane protein AupB.

It localises to the cell outer membrane. In terms of biological role, required for growth on alkanes. Probably involved in the uptake of micelle-solubilized alkanes. This Marinobacter nauticus (strain ATCC 49840 / DSM 8798 / CIP 103578 / SP17) (Marinobacter hydrocarbonoclasticus) protein is Alkane uptake protein A.